The primary structure comprises 485 residues: NADH-quinone oxidoreductase subunit N (485 aa).

Transmembrane regions (helical) follow at residues 8-28 (LIALLPLLIVGLTVVVVMLSI), 35-55 (FLNATLSVIGLNAALVSLWFV), 71-91 (GFAMLYTGLVLLASLATCTFA), 105-125 (FYLLVLIAALGGILLANANHL), 127-147 (SLFLGIELISLPLFGLVGYAF), 159-179 (YTILSAAASSFLLFGMALVYA), 203-223 (LLAGFGMMIVGLGFKLSLVPF), 235-255 (PAPVSTFLATASKIAIFGVVM), 271-291 (VVLAIIAFASIIFGNLMALSQ), 297-317 (LLGYSSISHLGYLLVALIALQ), 326-346 (VGGYLAGYLFSSLGAFGVVSL), 373-393 (AAVMTVMMLSLAGIPMTLGFI), 408-430 (WWLVGAVVVGSAIGLYYYLRVAV), and 455-475 (IVVLISALLVLVLGVWPQPLI).

Belongs to the complex I subunit 2 family. As to quaternary structure, NDH-1 is composed of 13 different subunits. Subunits NuoA, H, J, K, L, M, N constitute the membrane sector of the complex.

Its subcellular location is the cell inner membrane. It carries out the reaction a quinone + NADH + 5 H(+)(in) = a quinol + NAD(+) + 4 H(+)(out). Functionally, NDH-1 shuttles electrons from NADH, via FMN and iron-sulfur (Fe-S) centers, to quinones in the respiratory chain. The immediate electron acceptor for the enzyme in this species is believed to be ubiquinone. Couples the redox reaction to proton translocation (for every two electrons transferred, four hydrogen ions are translocated across the cytoplasmic membrane), and thus conserves the redox energy in a proton gradient. The polypeptide is NADH-quinone oxidoreductase subunit N (Shigella boydii serotype 18 (strain CDC 3083-94 / BS512)).